Consider the following 556-residue polypeptide: Potassium-transporting ATPase potassium-binding subunit (556 aa).

10 helical membrane passes run 6–26 (AGIL…VPLG), 65–85 (SVLA…LLQG), 133–153 (GLSV…MAFV), 176–196 (LRIL…GGVI), 249–269 (PTTW…FSLP), 283–303 (AAIL…MMLF), 378–398 (GLYS…LMVG), 419–439 (YFLV…ALPG), 483–503 (ALGL…LALA), and 526–546 (FVGM…LPVL).

It belongs to the KdpA family. In terms of assembly, the system is composed of three essential subunits: KdpA, KdpB and KdpC.

Its subcellular location is the cell membrane. In terms of biological role, part of the high-affinity ATP-driven potassium transport (or Kdp) system, which catalyzes the hydrolysis of ATP coupled with the electrogenic transport of potassium into the cytoplasm. This subunit binds the extracellular potassium ions and delivers the ions to the membrane domain of KdpB through an intramembrane tunnel. The polypeptide is Potassium-transporting ATPase potassium-binding subunit (Mycobacterium sp. (strain KMS)).